Here is a 227-residue protein sequence, read N- to C-terminus: Octanoyltransferase (227 aa).

Positions 35 to 222 constitute a BPL/LPL catalytic domain; it reads EAYENRIIMC…ELGRLLNEKK (188 aa). Substrate-binding positions include 80–87, 152–154, and 165–167; these read RGGDITYH, AIG, and GLA. Cysteine 183 (acyl-thioester intermediate) is an active-site residue.

This sequence belongs to the LipB family.

The protein localises to the cytoplasm. The catalysed reaction is octanoyl-[ACP] + L-lysyl-[protein] = N(6)-octanoyl-L-lysyl-[protein] + holo-[ACP] + H(+). It functions in the pathway protein modification; protein lipoylation via endogenous pathway; protein N(6)-(lipoyl)lysine from octanoyl-[acyl-carrier-protein]: step 1/2. In terms of biological role, catalyzes the transfer of endogenously produced octanoic acid from octanoyl-acyl-carrier-protein onto the lipoyl domains of lipoate-dependent enzymes. Lipoyl-ACP can also act as a substrate although octanoyl-ACP is likely to be the physiological substrate. In Bacteroides thetaiotaomicron (strain ATCC 29148 / DSM 2079 / JCM 5827 / CCUG 10774 / NCTC 10582 / VPI-5482 / E50), this protein is Octanoyltransferase.